The chain runs to 229 residues: Potassium/proton antiporter CemA (229 aa).

The next 4 membrane-spanning stretches (helical) occupy residues 7–27, 114–134, 154–174, and 189–209; these read FTPL…SFSF, IISF…LVVL, ILLL…ELMI, and IISG…KYWI.

Belongs to the CemA family.

Its subcellular location is the plastid. It is found in the chloroplast inner membrane. The enzyme catalyses K(+)(in) + H(+)(out) = K(+)(out) + H(+)(in). In terms of biological role, contributes to K(+)/H(+) antiport activity by supporting proton efflux to control proton extrusion and homeostasis in chloroplasts in a light-dependent manner to modulate photosynthesis. Prevents excessive induction of non-photochemical quenching (NPQ) under continuous-light conditions. Indirectly promotes efficient inorganic carbon uptake into chloroplasts. In Nandina domestica (Heavenly bamboo), this protein is Potassium/proton antiporter CemA.